The primary structure comprises 448 residues: Integrator complex subunit 15 (448 aa).

Belongs to the Integrator subunit 15 family. As to quaternary structure, component of the Integrator complex, composed of core subunits INTS1, INTS2, INTS3, INTS4, INTS5, INTS6, INTS7, INTS8, INTS9/RC74, INTS10, INTS11/CPSF3L, INTS12, INTS13, INTS14 and INTS15. The core complex associates with protein phosphatase 2A subunits PPP2CA and PPP2R1A, to form the Integrator-PP2A (INTAC) complex. INTS15 is part of the tail subcomplex, composed of INTS10, INTS13, INTS14 and INTS15.

It is found in the nucleus. The protein localises to the chromosome. Its function is as follows. Component of the integrator complex, a multiprotein complex that terminates RNA polymerase II (Pol II) transcription in the promoter-proximal region of genes. The integrator complex provides a quality checkpoint during transcription elongation by driving premature transcription termination of transcripts that are unfavorably configured for transcriptional elongation: the complex terminates transcription by (1) catalyzing dephosphorylation of the C-terminal domain (CTD) of Pol II subunit POLR2A/RPB1 and SUPT5H/SPT5, (2) degrading the exiting nascent RNA transcript via endonuclease activity and (3) promoting the release of Pol II from bound DNA. The integrator complex is also involved in terminating the synthesis of non-coding Pol II transcripts, such as enhancer RNAs (eRNAs), small nuclear RNAs (snRNAs), telomerase RNAs and long non-coding RNAs (lncRNAs). INTS15 is part of the integrator tail module that acts as a platform for the recruitment of transcription factors at promoters. Within the integrator complex, INTS15 is required to bridge different integrator modules. The protein is Integrator complex subunit 15 of Mus musculus (Mouse).